The primary structure comprises 210 residues: MPPYTIVYFPVQGRCEAMRMLLADQGQSWKEEVVAMQSWLQGPLKASCLYGQLPKFQDGDLTLYQSNAILRHLGRTLGLYGKDQQEAALVDMVNDGVEDLRCKYVSLIYTNYEAGKEDYVKALPQHLKPFETLLSQNKGGQAFIVGDQISFADYNLLDLLRIHQVLAPSCLDSFPLLSAYVARLNSRPKLKAFLASPEHMNRPINGNGKQ.

Residues 2 to 81 form the GST N-terminal domain; it reads PPYTIVYFPV…HLGRTLGLYG (80 aa). Tyrosine 4 carries the post-translational modification Phosphotyrosine; by EGFR. Glutathione is bound by residues tyrosine 8, arginine 14, tryptophan 39, lysine 45, and 52-53; that span reads QL. Position 62 is a phosphothreonine (threonine 62). Position 65 to 66 (65 to 66) interacts with glutathione; sequence QS. The region spanning 83–204 is the GST C-terminal domain; it reads DQQEAALVDM…ASPEHMNRPI (122 aa). Residues lysine 103 and lysine 116 each carry the N6-succinyllysine modification. Lysine 128 bears the N6-acetyllysine mark.

The protein belongs to the GST superfamily. Pi family. As to quaternary structure, homodimer. Interacts with CDK5.

It is found in the cytoplasm. It localises to the mitochondrion. The protein resides in the nucleus. The enzyme catalyses RX + glutathione = an S-substituted glutathione + a halide anion + H(+). It carries out the reaction prostaglandin J2 + glutathione = prostaglandin J2-S-(R)-glutathione. It catalyses the reaction prostaglandin J2 + glutathione = prostaglandin J2-S-(S)-glutathione. The catalysed reaction is prostaglandin A2 + glutathione = prostaglandin A2-S-(S)-glutathione. The enzyme catalyses 11(S)-hydroxy-14(S),15(S)-epoxy-(5Z,8Z,12E)-eicosatrienoate + glutathione = (11S,15S)-dihydroxy-14(R)-S-glutathionyl-(5Z,8Z,12E)-eicosatrienoate. Conjugation of reduced glutathione to a wide number of exogenous and endogenous hydrophobic electrophiles. Involved in the formation of glutathione conjugates of both prostaglandin A2 (PGA2) and prostaglandin J2 (PGJ2). Participates in the formation of novel hepoxilin regioisomers. Negatively regulates CDK5 activity via p25/p35 translocation to prevent neurodegeneration. In Bos taurus (Bovine), this protein is Glutathione S-transferase P (GSTP1).